The chain runs to 234 residues: UPF0758 protein STH371 (234 aa).

Residues 110-232 (DLCNPRAVFE…YTSFRERGLL (123 aa)) form the MPN domain. His-181, His-183, and Asp-194 together coordinate Zn(2+). A JAMM motif motif is present at residues 181 to 194 (HNHPSGDPTPSRED).

This sequence belongs to the UPF0758 family.

The polypeptide is UPF0758 protein STH371 (Symbiobacterium thermophilum (strain DSM 24528 / JCM 14929 / IAM 14863 / T)).